The following is a 570-amino-acid chain: Pantothenate kinase 2, mitochondrial (570 aa).

Residues 1 to 31 (MRRLGPFHPRVHWAAPPSLSSGLHRLLFLRG) constitute a mitochondrion transit peptide. 2 disordered regions span residues 34–94 (IPSS…PRAR) and 127–198 (GRLG…SVSR). Positions 82–94 (RWRNGRGGRPRAR) match the Nucleolar localization signal motif. A compositionally biased stretch (basic residues) spans 84–93 (RNGRGGRPRA). Basic and acidic residues predominate over residues 155 to 164 (PEGRRQEPLR). A phosphoserine mark is found at Ser-168, Ser-169, and Ser-189. Residues 168–179 (SSASVPAVGASA) are compositionally biased toward low complexity. The Nuclear export signal signature appears at 268 to 275 (LELKDLTL). Catalysis depends on Glu-338, which acts as the Proton acceptor. Ser-392, Ser-395, and Arg-407 together coordinate acetyl-CoA.

It belongs to the type II pantothenate kinase family. As to quaternary structure, homodimer. In terms of processing, synthesized as a 62-kDa precursor which is proteolytically processed by the mitochondrial-processing peptidase (MPP) via a 59-kDa intermediate to yield the mature mitochondrial 48-kDa subunit. In terms of tissue distribution, expressed in the brain (at protein level). Ubiquitous. Highly expressed in the testis. Expressed in the umbilical vein endothelial cells (HUVEC).

Its subcellular location is the mitochondrion. The protein resides in the mitochondrion intermembrane space. The protein localises to the nucleus. It localises to the cytoplasm. The enzyme catalyses (R)-pantothenate + ATP = (R)-4'-phosphopantothenate + ADP + H(+). Its pathway is cofactor biosynthesis; coenzyme A biosynthesis; CoA from (R)-pantothenate: step 1/5. With respect to regulation, strongly inhibited by acetyl-CoA and its thioesters. Activated by palmitoylcarnitine. Mitochondrial isoform that catalyzes the phosphorylation of pantothenate to generate 4'-phosphopantothenate in the first and rate-determining step of coenzyme A (CoA) synthesis. Required for angiogenic activity of umbilical vein of endothelial cells (HUVEC). In terms of biological role, cytoplasmic isoform that catalyzes the phosphorylation of pantothenate to generate 4'-phosphopantothenate in the first and rate-determining step of coenzyme A (CoA) synthesis. The protein is Pantothenate kinase 2, mitochondrial (PANK2) of Homo sapiens (Human).